A 534-amino-acid chain; its full sequence is MKPWLCLVFFTSAFLIWHAEAEFFTSIGQMTDLIYAEKDLVQSLKEYIRAEETKLSQIKSWAEKMDVLTSKSTSDPEGYLAHPVNAYKLVKRLNTDWLELENLVLQDTTNGFITNLTIQRQFFPTEEDETGAAKALMRLQDTYKLDPETLSRGNLPGTKYRSSLTVSDCFGMGKTAYNDGDYYHTVLWMEQALKQHDEGEDTTVSKVEILDYLSYAVFQFGDLHRAMELTRRLISLDSTHERAGSNLRYFEKLLEKEREKPSNKTVATTEPVVQSGAYERPLDYLPERDIYEALCRGEGVKMTPRRQKRLFCRYHDGNRNPHLLIAPFKEEDEWDSPHIVRYYDVMSDEEIEKIKQLAKPKLARATVRDPKTGVLTVASYRVSKSSWLEEDDDPVVAKVNQRMQQITGLTVKTAELLQVANYGMGGQYEPHFDFSRRPFDSTLKSEGNRLATFLNYMSDVEAGGATVFPDFGAAIWPKKGTAVFWYNLFRSGEGDYRTRHAACPVLVGCKWVSNKWFHERGNEFLRPCGRTEVD.

An N-terminal signal peptide occupies residues 1–21 (MKPWLCLVFFTSAFLIWHAEA). Asn-115 carries an N-linked (GlcNAc...) asparagine glycan. One copy of the TPR repeat lies at 207–240 (VEILDYLSYAVFQFGDLHRAMELTRRLISLDSTH). An N-linked (GlcNAc...) asparagine glycan is attached at Asn-263. The Fe2OG dioxygenase domain occupies 413-519 (TAELLQVANY…KWVSNKWFHE (107 aa)). Residues His-431, Asp-433, and His-500 each coordinate Fe cation. Residue Lys-510 participates in 2-oxoglutarate binding.

This sequence belongs to the P4HA family. As to quaternary structure, heterotetramer of two alpha-2 chains and two beta chains (the beta chain is the multi-functional PDI). The cofactor is Fe(2+). L-ascorbate serves as cofactor.

The protein localises to the endoplasmic reticulum lumen. The enzyme catalyses L-prolyl-[collagen] + 2-oxoglutarate + O2 = trans-4-hydroxy-L-prolyl-[collagen] + succinate + CO2. In terms of biological role, catalyzes the post-translational formation of 4-hydroxyproline in -Xaa-Pro-Gly- sequences in collagens and other proteins. This is Prolyl 4-hydroxylase subunit alpha-2 (P4HA2) from Gallus gallus (Chicken).